We begin with the raw amino-acid sequence, 80 residues long: UPF0291 protein EF_1580 (80 aa).

The segment at 60-80 (TDVTPEKLKKIQREKGLHNRK) is disordered. Residues 63–80 (TPEKLKKIQREKGLHNRK) show a composition bias toward basic and acidic residues.

Belongs to the UPF0291 family.

It localises to the cytoplasm. The protein is UPF0291 protein EF_1580 of Enterococcus faecalis (strain ATCC 700802 / V583).